Reading from the N-terminus, the 820-residue chain is Leucine--tRNA ligase (820 aa).

Positions P42–H52 match the 'HIGH' region motif. Positions K576 to S580 match the 'KMSKS' region motif. K579 contacts ATP.

Belongs to the class-I aminoacyl-tRNA synthetase family.

It is found in the cytoplasm. It catalyses the reaction tRNA(Leu) + L-leucine + ATP = L-leucyl-tRNA(Leu) + AMP + diphosphate. In Coxiella burnetii (strain RSA 493 / Nine Mile phase I), this protein is Leucine--tRNA ligase.